The primary structure comprises 178 residues: Large ribosomal subunit protein bL25 (178 aa).

This sequence belongs to the bacterial ribosomal protein bL25 family. CTC subfamily. In terms of assembly, part of the 50S ribosomal subunit; part of the 5S rRNA/L5/L18/L25 subcomplex. Contacts the 5S rRNA. Binds to the 5S rRNA independently of L5 and L18.

In terms of biological role, this is one of the proteins that binds to the 5S RNA in the ribosome where it forms part of the central protuberance. The sequence is that of Large ribosomal subunit protein bL25 from Wolinella succinogenes (strain ATCC 29543 / DSM 1740 / CCUG 13145 / JCM 31913 / LMG 7466 / NCTC 11488 / FDC 602W) (Vibrio succinogenes).